Reading from the N-terminus, the 398-residue chain is Phosphoglycerate kinase (398 aa).

Residues 21–23 (DFN), Arg36, 59–62 (HLGR), Arg119, and Arg157 contribute to the substrate site. ATP contacts are provided by residues Lys208, Gly296, Glu327, and 354–357 (GGDS).

It belongs to the phosphoglycerate kinase family. In terms of assembly, monomer.

The protein localises to the cytoplasm. It carries out the reaction (2R)-3-phosphoglycerate + ATP = (2R)-3-phospho-glyceroyl phosphate + ADP. It participates in carbohydrate degradation; glycolysis; pyruvate from D-glyceraldehyde 3-phosphate: step 2/5. The sequence is that of Phosphoglycerate kinase from Streptococcus equi subsp. equi (strain 4047).